A 358-amino-acid polypeptide reads, in one-letter code: UPF0725 protein At4g29550 (358 aa).

Residues 31 to 82 form a disordered region; that stretch reads LNKHPPSGSGWTDEDDDNDDVFSSSFISKEELSDAVHNDPPSGWTDEDDDDQ. The segment covering 58-67 has biased composition (basic and acidic residues); that stretch reads SKEELSDAVH.

Belongs to the UPF0725 (EMB2204) family.

The polypeptide is UPF0725 protein At4g29550 (Arabidopsis thaliana (Mouse-ear cress)).